The sequence spans 116 residues: Methionine-R-sulfoxide reductase B1 (116 aa).

Residues 1 to 106 form the MsrB domain; sequence MSFCSFFGGE…FSSSLKFIPK (106 aa). Residues Cys23, Cys26, Cys71, and Cys74 each contribute to the Zn(2+) site. The Nucleophile role is filled by Sec95. A non-standard amino acid (selenocysteine) is located at residue Sec95.

It belongs to the MsrB Met sulfoxide reductase family. The cofactor is Zn(2+). Truncated MSRB1/SEPX1 proteins produced by failed UGA/Sec decoding are ubiquitinated by the CRL2(FEM1C) E3 ubiquitin-protein ligase complex.

The protein resides in the cytoplasm. Its subcellular location is the nucleus. The protein localises to the cytoskeleton. The catalysed reaction is L-methionyl-[protein] + [thioredoxin]-disulfide + H2O = L-methionyl-(R)-S-oxide-[protein] + [thioredoxin]-dithiol. The enzyme catalyses [thioredoxin]-disulfide + L-methionine + H2O = L-methionine (R)-S-oxide + [thioredoxin]-dithiol. Methionine-sulfoxide reductase that specifically reduces methionine (R)-sulfoxide back to methionine. While in many cases, methionine oxidation is the result of random oxidation following oxidative stress, methionine oxidation is also a post-translational modification that takes place on specific residue. Acts as a regulator of actin assembly by reducing methionine (R)-sulfoxide mediated by MICALs (MICAL1, MICAL2 or MICAL3) on actin, thereby promoting filament repolymerization. Plays a role in innate immunity by reducing oxidized actin, leading to actin repolymerization in macrophages. The chain is Methionine-R-sulfoxide reductase B1 (MSRB1) from Bos taurus (Bovine).